A 401-amino-acid chain; its full sequence is Argininosuccinate synthase (401 aa).

ATP-binding positions include 10-18 (AYSGGVDTS) and Ala38. Tyr89 is a binding site for L-citrulline. Gly119 serves as a coordination point for ATP. 3 residues coordinate L-aspartate: Thr121, Asn125, and Asp126. Asn125 provides a ligand contact to L-citrulline. The L-citrulline site is built by Arg129, Ser177, Ser186, Glu262, and Tyr274.

Belongs to the argininosuccinate synthase family. Type 1 subfamily. As to quaternary structure, homotetramer.

Its subcellular location is the cytoplasm. The enzyme catalyses L-citrulline + L-aspartate + ATP = 2-(N(omega)-L-arginino)succinate + AMP + diphosphate + H(+). It participates in amino-acid biosynthesis; L-arginine biosynthesis; L-arginine from L-ornithine and carbamoyl phosphate: step 2/3. The sequence is that of Argininosuccinate synthase from Prochlorococcus marinus (strain MIT 9303).